Reading from the N-terminus, the 405-residue chain is MSAQPISDFYAYPDAAGHFGKFGGRFVAETLIGPLQELSAAYDQARQDPSFIAEYDKDLKHYVGRPSPIYHAERLSREVGGAQILLKREDLNHTGAHKINNTIGQALLASRMGKTRIIAETGAGQHGVASATVAARLGLECLVYMGATDIERQKINVYRMKLLGATVIPVTSGSATLKDALNEAMRDWVTNVRDTFYIIGTVAGPDPYPRMVRDFNAIVGRESRAQMLEDYGRLPDAISACVGGGSNAIGLFHAFLNDPGVKIYGAEAAGDGIATGRHAASIAAGRPGVLHGNRTYVICDDDGQITETHSISAGLDYPGVGPEHAFLSDSGRAVYQGITDDEAMAAFHLLAHTEGILAALESSHAVAQSIKLARELPKDALVLCNLSGRGDKDVHTIAAREGLAL.

N6-(pyridoxal phosphate)lysine is present on Lys98.

The protein belongs to the TrpB family. In terms of assembly, tetramer of two alpha and two beta chains. Pyridoxal 5'-phosphate serves as cofactor.

It carries out the reaction (1S,2R)-1-C-(indol-3-yl)glycerol 3-phosphate + L-serine = D-glyceraldehyde 3-phosphate + L-tryptophan + H2O. The protein operates within amino-acid biosynthesis; L-tryptophan biosynthesis; L-tryptophan from chorismate: step 5/5. Its function is as follows. The beta subunit is responsible for the synthesis of L-tryptophan from indole and L-serine. In Xanthomonas oryzae pv. oryzae (strain MAFF 311018), this protein is Tryptophan synthase beta chain.